We begin with the raw amino-acid sequence, 300 residues long: Recombination-associated protein RdgC (300 aa).

It belongs to the RdgC family.

The protein resides in the cytoplasm. It is found in the nucleoid. In terms of biological role, may be involved in recombination. The chain is Recombination-associated protein RdgC from Janthinobacterium sp. (strain Marseille) (Minibacterium massiliensis).